The sequence spans 530 residues: Probable 1,4-beta-D-glucan cellobiohydrolase B (530 aa).

An N-terminal signal peptide occupies residues M1–A26. Residues Q27–S461 form a catalytic region. E238 serves as the catalytic Nucleophile. The active-site Proton donor is E243. N296 carries N-linked (GlcNAc...) asparagine glycosylation. A disordered region spans residues T462–G492. Positions T462 to G494 are ser/Thr-rich linker. Over residues T475–G488 the composition is skewed to low complexity. Residues G494–L530 form the CBM1 domain. 2 disulfides stabilise this stretch: C502–C519 and C513–C529.

This sequence belongs to the glycosyl hydrolase 7 (cellulase C) family.

It is found in the secreted. The catalysed reaction is Hydrolysis of (1-&gt;4)-beta-D-glucosidic linkages in cellulose and cellotetraose, releasing cellobiose from the non-reducing ends of the chains.. Functionally, the biological conversion of cellulose to glucose generally requires three types of hydrolytic enzymes: (1) Endoglucanases which cut internal beta-1,4-glucosidic bonds; (2) Exocellobiohydrolases that cut the disaccharide cellobiose from the non-reducing end of the cellulose polymer chain; (3) Beta-1,4-glucosidases which hydrolyze the cellobiose and other short cello-oligosaccharides to glucose. The protein is Probable 1,4-beta-D-glucan cellobiohydrolase B (cbhB) of Neosartorya fischeri (strain ATCC 1020 / DSM 3700 / CBS 544.65 / FGSC A1164 / JCM 1740 / NRRL 181 / WB 181) (Aspergillus fischerianus).